A 289-amino-acid chain; its full sequence is Probable ABC transporter permease protein BruAb2_0483 (289 aa).

Helical transmembrane passes span 9–29 (FLIL…VVHL), 70–90 (VWTV…AIIL), 99–119 (VARV…AIFW), 144–166 (IQWL…LVTV), 213–233 (IAIV…WVMT), and 258–278 (FGEA…FTVI). Positions 65 to 279 (LWRTAVWTVA…AILLVFTVIY (215 aa)) constitute an ABC transmembrane type-1 domain.

Belongs to the binding-protein-dependent transport system permease family. In terms of assembly, the complex is composed of two ATP-binding proteins (BruAb2_0487), two transmembrane proteins (BruAb2_0483) and a solute-binding protein (BruAb2_0484).

It is found in the cell inner membrane. Probably part of an ABC transporter complex. Probably responsible for the translocation of the substrate across the membrane. The chain is Probable ABC transporter permease protein BruAb2_0483 from Brucella abortus biovar 1 (strain 9-941).